The primary structure comprises 473 residues: Glutamine synthetase (473 aa).

The region spanning 15-100 (ENIKIIDLKF…ICSIKEPRTG (86 aa)) is the GS beta-grasp domain. In terms of domain architecture, GS catalytic spans 107–473 (PRTIAAKAVE…PYEFSLYYDC (367 aa)). Mn(2+) is bound at residue glutamate 132. Residue glutamate 134 participates in Mg(2+) binding. Glutamate 210 serves as a coordination point for ATP. Mg(2+) contacts are provided by glutamate 215 and glutamate 223. L-glutamate-binding positions include 267–268 (NG) and glycine 268. Histidine 272 lines the Mg(2+) pocket. ATP-binding positions include 274-276 (HQS) and serine 276. Positions 324, 330, and 342 each coordinate L-glutamate. ATP-binding residues include arginine 342, arginine 347, and lysine 356. Glutamate 361 serves as a coordination point for Mn(2+). Residue arginine 363 coordinates L-glutamate. At tyrosine 401 the chain carries O-AMP-tyrosine.

This sequence belongs to the glutamine synthetase family. Oligomer of 12 subunits arranged in the form of two hexagons. Requires Mg(2+) as cofactor.

It localises to the cytoplasm. The catalysed reaction is L-glutamate + NH4(+) + ATP = L-glutamine + ADP + phosphate + H(+). Inhibited by ADP (90%), AMP (80%), alanine (52%) and aspartate (41%). The activity of this enzyme could be controlled by adenylation under conditions of abundant glutamine. Functionally, involved in nitrogen metabolism via ammonium assimilation. Catalyzes the ATP-dependent biosynthesis of glutamine from glutamate and ammonia. The chain is Glutamine synthetase from Synechocystis sp. (strain ATCC 27184 / PCC 6803 / Kazusa).